Reading from the N-terminus, the 158-residue chain is Large ribosomal subunit protein uL15 (158 aa).

Belongs to the universal ribosomal protein uL15 family. In terms of assembly, part of the 50S ribosomal subunit.

Binds to the 23S rRNA. This Aeropyrum pernix (strain ATCC 700893 / DSM 11879 / JCM 9820 / NBRC 100138 / K1) protein is Large ribosomal subunit protein uL15.